The following is a 353-amino-acid chain: Fe(3+) ions import ATP-binding protein FbpC (353 aa).

One can recognise an ABC transporter domain in the interval 9-239; the sequence is VTFENVTKKF…PASAFIADFM (231 aa). An ATP-binding site is contributed by 41–48; it reads GLSGCGKT.

Belongs to the ABC transporter superfamily. Fe(3+) ion importer (TC 3.A.1.10) family. In terms of assembly, the complex is composed of two ATP-binding proteins (FbpC), two transmembrane proteins (FbpB) and a solute-binding protein (FbpA).

The protein resides in the cell inner membrane. The catalysed reaction is Fe(3+)(out) + ATP + H2O = Fe(3+)(in) + ADP + phosphate + H(+). Its function is as follows. Part of the ABC transporter complex FbpABC involved in Fe(3+) ions import. Responsible for energy coupling to the transport system. The sequence is that of Fe(3+) ions import ATP-binding protein FbpC from Brucella melitensis biotype 1 (strain ATCC 23456 / CCUG 17765 / NCTC 10094 / 16M).